Here is a 383-residue protein sequence, read N- to C-terminus: Chitinase-3-like protein 1 (383 aa).

The N-terminal stretch at 1 to 21 is a signal peptide; sequence MGVKASQTGFVVLVLLQCCSA. One can recognise a GH18 domain in the interval 22–383; the sequence is YKLVCYYTSW…NAIKDALAAT (362 aa). An intrachain disulfide couples Cys-26 to Cys-51. A glycan (N-linked (GlcNAc...) asparagine) is linked at Asn-60. Residues 70–71, 97–100, Tyr-141, 204–207, and Arg-263 contribute to the chitin site; these read EW, GGWN, and MTYD. A disulfide bridge links Cys-300 with Cys-364. Residues 324–338 form an important for AKT1 activation and IL8 production region; it reads QWVGYDDQESVKSKV. Trp-352 serves as a coordination point for chitin.

It belongs to the glycosyl hydrolase 18 family. As to quaternary structure, monomer. Glycosylated. In terms of tissue distribution, present in activated macrophages, articular chondrocytes, synovial cells as well as in liver. Very low or undetectable expression in non-inflammatory colon. Undetectable in muscle tissues, lung, pancreas, mononuclear cells, or fibroblasts.

It localises to the secreted. The protein localises to the extracellular space. Its subcellular location is the cytoplasm. The protein resides in the perinuclear region. It is found in the endoplasmic reticulum. In terms of biological role, carbohydrate-binding lectin with a preference for chitin. Has no chitinase activity. May play a role in tissue remodeling and in the capacity of cells to respond to and cope with changes in their environment. Plays a role in T-helper cell type 2 (Th2) inflammatory response and IL-13-induced inflammation, regulating allergen sensitization, inflammatory cell apoptosis, dendritic cell accumulation and M2 macrophage differentiation. Facilitates invasion of pathogenic enteric bacteria into colonic mucosa and lymphoid organs. Mediates activation of AKT1 signaling pathway and subsequent IL8 production in colonic epithelial cells. Regulates antibacterial responses in lung by contributing to macrophage bacterial killing, controlling bacterial dissemination and augmenting host tolerance. Also regulates hyperoxia-induced injury, inflammation and epithelial apoptosis in lung. The polypeptide is Chitinase-3-like protein 1 (CHI3L1) (Homo sapiens (Human)).